A 677-amino-acid polypeptide reads, in one-letter code: Heat shock transcription factor (677 aa).

2 disordered regions span residues 1–56 and 115–164; these read MGHN…DDSN and STSS…SQQP. Polar residues-rich tracts occupy residues 115–131 and 143–164; these read STSSAAKLSDGDLTNAT and QPSSESQSHSNGYHKQGQSQQP. A DNA-binding region spans residues 193–297; the sequence is ARPAFVNKLW…EYLLENIVRQ (105 aa). Residues 320–373 form an involved in trimerization region; it reads ELETVKYNQLAIAEDLKRITKDNEMLWKENMMARERHQSQQQVLEKLLRFLSSV. 2 stretches are compositionally biased toward low complexity: residues 400-416 and 457-501; these read NHMSNNNHNNTGNINPN and RSMS…QGQQ. 3 disordered regions span residues 400–444, 457–541, and 606–677; these read NHMS…VPLQ, RSMS…NQYS, and KLNP…RRAA. The activatory stretch occupies residues 466–677; sequence NLNQRQSPQN…NNGQKRRRAA (212 aa). Polar residues-rich tracts occupy residues 502–541 and 629–641; these read FSYPIQGGNQMMNQLGSPIGTQVGSPVGSQYGNQYGNQYS and FANTGGSGQSEQP. The span at 650–669 shows a compositional bias: basic and acidic residues; that stretch reads EELRNSRLHEPDRSFEEKNN.

The protein belongs to the HSF family. In terms of assembly, homotrimer. Homotrimerization increases the affinity of HSF1 to DNA. Exhibits temperature-dependent phosphorylation.

It localises to the nucleus. Its function is as follows. DNA-binding transcription factor that specifically binds heat shock promoter elements (HSE) and activates transcription. The polypeptide is Heat shock transcription factor (Kluyveromyces lactis (strain ATCC 8585 / CBS 2359 / DSM 70799 / NBRC 1267 / NRRL Y-1140 / WM37) (Yeast)).